A 412-amino-acid polypeptide reads, in one-letter code: Argininosuccinate synthase (412 aa).

10-18 is a binding site for ATP; that stretch reads AYSGGLDTS. Position 89 (Tyr-89) interacts with L-citrulline. Gly-119 lines the ATP pocket. L-aspartate is bound by residues Thr-121, Asn-125, and Asp-126. Asn-125 is an L-citrulline binding site. Residues Arg-129, Ser-177, Glu-261, and Tyr-273 each contribute to the L-citrulline site.

The protein belongs to the argininosuccinate synthase family. Type 1 subfamily. As to quaternary structure, homotetramer.

The protein localises to the cytoplasm. The enzyme catalyses L-citrulline + L-aspartate + ATP = 2-(N(omega)-L-arginino)succinate + AMP + diphosphate + H(+). Its pathway is amino-acid biosynthesis; L-arginine biosynthesis; L-arginine from L-ornithine and carbamoyl phosphate: step 2/3. In Bifidobacterium longum (strain NCC 2705), this protein is Argininosuccinate synthase.